Here is a 495-residue protein sequence, read N- to C-terminus: Probable cytochrome P450 508C1 (495 aa).

A helical membrane pass occupies residues 3–21; sequence LLNSLLLLFLIYLIHSFYI. A heme-binding site is contributed by Cys-442.

Belongs to the cytochrome P450 family. Requires heme as cofactor.

Its subcellular location is the membrane. This is Probable cytochrome P450 508C1 (cyp508C1) from Dictyostelium discoideum (Social amoeba).